Consider the following 212-residue polypeptide: Urease accessory protein UreG (212 aa).

11–18 (GPVGSGKT) contributes to the GTP binding site.

It belongs to the SIMIBI class G3E GTPase family. UreG subfamily. In terms of assembly, homodimer. UreD, UreF and UreG form a complex that acts as a GTP-hydrolysis-dependent molecular chaperone, activating the urease apoprotein by helping to assemble the nickel containing metallocenter of UreC. The UreE protein probably delivers the nickel.

It is found in the cytoplasm. Its function is as follows. Facilitates the functional incorporation of the urease nickel metallocenter. This process requires GTP hydrolysis, probably effectuated by UreG. This is Urease accessory protein UreG from Trichodesmium erythraeum (strain IMS101).